An 85-amino-acid chain; its full sequence is Large ribosomal subunit protein bL27 (85 aa).

The disordered stretch occupies residues 1-21 (MAHKKAGGSTRNGRDSESKRL).

This sequence belongs to the bacterial ribosomal protein bL27 family.

The protein is Large ribosomal subunit protein bL27 of Pseudomonas putida (strain W619).